Reading from the N-terminus, the 150-residue chain is Putative ribosome maturation factor RimP (150 aa).

This sequence belongs to the RimP family.

Its subcellular location is the cytoplasm. Its function is as follows. Required for maturation of 30S ribosomal subunits. The protein is Putative ribosome maturation factor RimP of Mycobacterium leprae (strain TN).